The chain runs to 377 residues: Nitric oxide reductase FlRd-NAD(+) reductase (377 aa).

This sequence belongs to the FAD-dependent oxidoreductase family. Requires FAD as cofactor.

It localises to the cytoplasm. It catalyses the reaction 2 reduced [nitric oxide reductase rubredoxin domain] + NAD(+) + H(+) = 2 oxidized [nitric oxide reductase rubredoxin domain] + NADH. It functions in the pathway nitrogen metabolism; nitric oxide reduction. Its function is as follows. One of at least two accessory proteins for anaerobic nitric oxide (NO) reductase. Reduces the rubredoxin moiety of NO reductase. This chain is Nitric oxide reductase FlRd-NAD(+) reductase, found in Escherichia coli O6:K15:H31 (strain 536 / UPEC).